The chain runs to 256 residues: tRNA-cytidine(32) 2-sulfurtransferase (256 aa).

The short motif at 35–40 is the PP-loop motif element; the sequence is SGGKDS. 3 residues coordinate [4Fe-4S] cluster: Cys-110, Cys-113, and Cys-201.

The protein belongs to the TtcA family. Homodimer. Requires Mg(2+) as cofactor. It depends on [4Fe-4S] cluster as a cofactor.

The protein resides in the cytoplasm. The enzyme catalyses cytidine(32) in tRNA + S-sulfanyl-L-cysteinyl-[cysteine desulfurase] + AH2 + ATP = 2-thiocytidine(32) in tRNA + L-cysteinyl-[cysteine desulfurase] + A + AMP + diphosphate + H(+). It participates in tRNA modification. Catalyzes the ATP-dependent 2-thiolation of cytidine in position 32 of tRNA, to form 2-thiocytidine (s(2)C32). The sulfur atoms are provided by the cysteine/cysteine desulfurase (IscS) system. The chain is tRNA-cytidine(32) 2-sulfurtransferase from Coxiella burnetii (strain RSA 493 / Nine Mile phase I).